Consider the following 333-residue polypeptide: Ketol-acid reductoisomerase (NADP(+)) (333 aa).

Positions 1-179 constitute a KARI N-terminal Rossmann domain; the sequence is MFYDDDADLT…GGTRAGVIKT (179 aa). Residues 22–25, K45, S48, S50, and 80–83 contribute to the NADP(+) site; these read YGSQ and DTAQ. H105 is an active-site residue. An NADP(+)-binding site is contributed by G131. The 146-residue stretch at 180–325 folds into the KARI C-terminal knotted domain; the sequence is TFKDETETDL…KRLRDLMSWV (146 aa). Mg(2+) is bound by residues D188, E192, E224, and E228. S249 lines the substrate pocket.

Belongs to the ketol-acid reductoisomerase family. Requires Mg(2+) as cofactor.

The catalysed reaction is (2R)-2,3-dihydroxy-3-methylbutanoate + NADP(+) = (2S)-2-acetolactate + NADPH + H(+). It catalyses the reaction (2R,3R)-2,3-dihydroxy-3-methylpentanoate + NADP(+) = (S)-2-ethyl-2-hydroxy-3-oxobutanoate + NADPH + H(+). It participates in amino-acid biosynthesis; L-isoleucine biosynthesis; L-isoleucine from 2-oxobutanoate: step 2/4. Its pathway is amino-acid biosynthesis; L-valine biosynthesis; L-valine from pyruvate: step 2/4. In terms of biological role, involved in the biosynthesis of branched-chain amino acids (BCAA). Catalyzes an alkyl-migration followed by a ketol-acid reduction of (S)-2-acetolactate (S2AL) to yield (R)-2,3-dihydroxy-isovalerate. In the isomerase reaction, S2AL is rearranged via a Mg-dependent methyl migration to produce 3-hydroxy-3-methyl-2-ketobutyrate (HMKB). In the reductase reaction, this 2-ketoacid undergoes a metal-dependent reduction by NADPH to yield (R)-2,3-dihydroxy-isovalerate. This Mycobacterium avium (strain 104) protein is Ketol-acid reductoisomerase (NADP(+)).